We begin with the raw amino-acid sequence, 127 residues long: Mitochondrial pyruvate carrier 2 (127 aa).

The Mitochondrial matrix portion of the chain corresponds to 2–40; it reads AAAGARGLRATYHRLMDKVELLLPKKLRPLYNHPAGPRT. K26 carries the post-translational modification N6-acetyllysine. Residues 41 to 61 form a helical membrane-spanning segment; that stretch reads VFFWAPIMKWGLVCAGLADMA. The Mitochondrial intermembrane portion of the chain corresponds to 62-72; that stretch reads RPAEKLSTAQS. Residues 73 to 90 traverse the membrane as a helical segment; it reads TVLMATGFIWSRYSLVII. Topologically, residues 91–95 are mitochondrial matrix; sequence PKNWS. A helical membrane pass occupies residues 96-115; it reads LFAVNFFVGSAGASQLFRIW. Over 116 to 127 the chain is Mitochondrial intermembrane; it reads KYNQELKSKGIQ.

Belongs to the mitochondrial pyruvate carrier (MPC) (TC 2.A.105) family. Homodimer. Homooligomer. Forms heterodimers with MPC1 and MPC1L. The heterodimer is the more stable and dominant form. In terms of tissue distribution, liver, kidney, and brain.

The protein localises to the mitochondrion inner membrane. The catalysed reaction is pyruvate(out) + H(+)(out) = pyruvate(in) + H(+)(in). Mediates the uptake of pyruvate into mitochondria. The protein is Mitochondrial pyruvate carrier 2 (Mpc2) of Rattus norvegicus (Rat).